A 933-amino-acid chain; its full sequence is Phosphoenolpyruvate carboxylase (933 aa).

Active-site residues include His164 and Lys595.

The protein belongs to the PEPCase type 1 family. Mg(2+) is required as a cofactor.

The catalysed reaction is oxaloacetate + phosphate = phosphoenolpyruvate + hydrogencarbonate. Its function is as follows. Forms oxaloacetate, a four-carbon dicarboxylic acid source for the tricarboxylic acid cycle. This is Phosphoenolpyruvate carboxylase from Rhodopseudomonas palustris (strain HaA2).